The chain runs to 571 residues: Proline--tRNA ligase (571 aa).

It belongs to the class-II aminoacyl-tRNA synthetase family. ProS type 1 subfamily. As to quaternary structure, homodimer.

It is found in the cytoplasm. It catalyses the reaction tRNA(Pro) + L-proline + ATP = L-prolyl-tRNA(Pro) + AMP + diphosphate. Its function is as follows. Catalyzes the attachment of proline to tRNA(Pro) in a two-step reaction: proline is first activated by ATP to form Pro-AMP and then transferred to the acceptor end of tRNA(Pro). As ProRS can inadvertently accommodate and process non-cognate amino acids such as alanine and cysteine, to avoid such errors it has two additional distinct editing activities against alanine. One activity is designated as 'pretransfer' editing and involves the tRNA(Pro)-independent hydrolysis of activated Ala-AMP. The other activity is designated 'posttransfer' editing and involves deacylation of mischarged Ala-tRNA(Pro). The misacylated Cys-tRNA(Pro) is not edited by ProRS. This is Proline--tRNA ligase from Pseudoalteromonas atlantica (strain T6c / ATCC BAA-1087).